The sequence spans 156 residues: Peptide methionine sulfoxide reductase MsrA (156 aa).

Cys10 is a catalytic residue.

The protein belongs to the MsrA Met sulfoxide reductase family.

The catalysed reaction is L-methionyl-[protein] + [thioredoxin]-disulfide + H2O = L-methionyl-(S)-S-oxide-[protein] + [thioredoxin]-dithiol. It catalyses the reaction [thioredoxin]-disulfide + L-methionine + H2O = L-methionine (S)-S-oxide + [thioredoxin]-dithiol. Functionally, has an important function as a repair enzyme for proteins that have been inactivated by oxidation. Catalyzes the reversible oxidation-reduction of methionine sulfoxide in proteins to methionine. The sequence is that of Peptide methionine sulfoxide reductase MsrA from Acidobacterium capsulatum (strain ATCC 51196 / DSM 11244 / BCRC 80197 / JCM 7670 / NBRC 15755 / NCIMB 13165 / 161).